A 135-amino-acid chain; its full sequence is Aspartate 1-decarboxylase (135 aa).

Catalysis depends on Ser25, which acts as the Schiff-base intermediate with substrate; via pyruvic acid. Ser25 is modified (pyruvic acid (Ser)). Thr57 contacts substrate. The active-site Proton donor is Tyr58. 73–75 (GAA) serves as a coordination point for substrate.

The protein belongs to the PanD family. As to quaternary structure, heterooctamer of four alpha and four beta subunits. It depends on pyruvate as a cofactor. In terms of processing, is synthesized initially as an inactive proenzyme, which is activated by self-cleavage at a specific serine bond to produce a beta-subunit with a hydroxyl group at its C-terminus and an alpha-subunit with a pyruvoyl group at its N-terminus.

The protein localises to the cytoplasm. It catalyses the reaction L-aspartate + H(+) = beta-alanine + CO2. Its pathway is cofactor biosynthesis; (R)-pantothenate biosynthesis; beta-alanine from L-aspartate: step 1/1. In terms of biological role, catalyzes the pyruvoyl-dependent decarboxylation of aspartate to produce beta-alanine. The protein is Aspartate 1-decarboxylase of Mycobacterium sp. (strain JLS).